The sequence spans 238 residues: NAD(P)H-hydrate epimerase (238 aa).

The YjeF N-terminal domain occupies 11-217 (AAALDKDLMS…EIHQKYNLQL (207 aa)). (6S)-NADPHX is bound at residue 61-65 (NNGGD). 2 residues coordinate K(+): N62 and D123. (6S)-NADPHX is bound by residues 127–133 (GFSFTGS) and D156. S159 lines the K(+) pocket.

It belongs to the NnrE/AIBP family. It depends on K(+) as a cofactor.

The protein resides in the cytoplasm. The protein localises to the mitochondrion. It catalyses the reaction (6R)-NADHX = (6S)-NADHX. It carries out the reaction (6R)-NADPHX = (6S)-NADPHX. Its function is as follows. Catalyzes the epimerization of the S- and R-forms of NAD(P)HX, a damaged form of NAD(P)H that is a result of enzymatic or heat-dependent hydration. This is a prerequisite for the S-specific NAD(P)H-hydrate dehydratase to allow the repair of both epimers of NAD(P)HX. This Sclerotinia sclerotiorum (strain ATCC 18683 / 1980 / Ss-1) (White mold) protein is NAD(P)H-hydrate epimerase.